The sequence spans 119 residues: Large ribosomal subunit protein bL19 (119 aa).

The protein belongs to the bacterial ribosomal protein bL19 family.

This protein is located at the 30S-50S ribosomal subunit interface and may play a role in the structure and function of the aminoacyl-tRNA binding site. This is Large ribosomal subunit protein bL19 from Treponema denticola (strain ATCC 35405 / DSM 14222 / CIP 103919 / JCM 8153 / KCTC 15104).